We begin with the raw amino-acid sequence, 105 residues long: Pyrimidine/purine nucleoside phosphorylase (105 aa).

This sequence belongs to the nucleoside phosphorylase PpnP family.

It catalyses the reaction a purine D-ribonucleoside + phosphate = a purine nucleobase + alpha-D-ribose 1-phosphate. It carries out the reaction adenosine + phosphate = alpha-D-ribose 1-phosphate + adenine. The catalysed reaction is cytidine + phosphate = cytosine + alpha-D-ribose 1-phosphate. The enzyme catalyses guanosine + phosphate = alpha-D-ribose 1-phosphate + guanine. It catalyses the reaction inosine + phosphate = alpha-D-ribose 1-phosphate + hypoxanthine. It carries out the reaction thymidine + phosphate = 2-deoxy-alpha-D-ribose 1-phosphate + thymine. The catalysed reaction is uridine + phosphate = alpha-D-ribose 1-phosphate + uracil. The enzyme catalyses xanthosine + phosphate = alpha-D-ribose 1-phosphate + xanthine. Catalyzes the phosphorolysis of diverse nucleosides, yielding D-ribose 1-phosphate and the respective free bases. Can use uridine, adenosine, guanosine, cytidine, thymidine, inosine and xanthosine as substrates. Also catalyzes the reverse reactions. In Ralstonia pickettii (strain 12J), this protein is Pyrimidine/purine nucleoside phosphorylase.